Consider the following 819-residue polypeptide: Outer membrane usher protein CssD (819 aa).

The protein belongs to the fimbrial export usher family.

It is found in the cell outer membrane. Its function is as follows. Involved in the export and assembly of C6 fimbrial subunits across the outer membrane. This is Outer membrane usher protein CssD (cssD) from Escherichia coli.